We begin with the raw amino-acid sequence, 413 residues long: Chloramphenicol efflux pump MT0201 (413 aa).

Helical transmembrane passes span 23–43 (LSVLACAAFIYVTAEILPVGA), 55–75 (VVLVGTLLSWYALVAAVTTVP), 89–109 (LVVSLVCLTVSQLVSALAPNF), 110–130 (AVLAAGRVLCAVTHGLLWAVI), 150–170 (IYIGTSLALVVGSPLTAAMSL), 176–196 (LAAVCVTGAAAAVALAARLAL), 226–246 (VLTMIAVTGHFVSYTYIVVII), 256–276 (NLAWLLAAYGVAGLVSVPLVA), 286–306 (AVIVGMTGLTAAFTLLTALAF), 312–332 (AATALLGTGAIVLWGALATAV), 353–373 (GLYVTAFQIGIMAGALLGGLL), and 378–398 (LAMMLTASAGLMGVALFGMTV).

This sequence belongs to the major facilitator superfamily.

The protein resides in the cell membrane. Functionally, active efflux pump that plays an important role in chloramphenicol resistance. This is Chloramphenicol efflux pump MT0201 from Mycobacterium tuberculosis (strain CDC 1551 / Oshkosh).